The primary structure comprises 255 residues: 28.1 kDa virulence protein (255 aa).

Belongs to the SpvA family.

In terms of biological role, not known. This protein is involved in the virulence of salmonellas. The chain is 28.1 kDa virulence protein (mkaB) from Salmonella typhimurium.